Consider the following 3001-residue polypeptide: BEACH domain-containing protein C2 (3001 aa).

7 disordered regions span residues 43–80 (DFEQVSLGDQEKAANESQGDLQEPGSFSNSDHGRSSFG), 103–156 (DVQS…KATV), 1018–1076 (NVLA…NVGS), 1846–1868 (TFSSFQKPLEPPNNNAPPRPRDK), 2039–2071 (YSGTDHHGAAADYDDQTETKSDNGSKGSQSNPP), 2101–2132 (AEEHKRDEGRISGSHEHASRTSAGNSDPRTSN), and 2193–2212 (NLADHSDESQSGDQEKDRSW). S48 bears the Phosphoserine mark. 3 stretches are compositionally biased toward polar residues: residues 57–72 (NESQGDLQEPGSFSNS), 121–132 (SMQQSLSETSLD), and 1037–1050 (SPYNESGSVKQLDS). Residues 1854–1863 (LEPPNNNAPP) show a composition bias toward pro residues. Basic and acidic residues predominate over residues 2101-2119 (AEEHKRDEGRISGSHEHAS). Residues 2120 to 2129 (RTSAGNSDPR) show a composition bias toward polar residues. The BEACH-type PH domain maps to 2151-2260 (ELDERILLEL…GRRNAYRAIV (110 aa)). The span at 2196-2211 (DHSDESQSGDQEKDRS) shows a compositional bias: basic and acidic residues. The 290-residue stretch at 2275–2564 (QRPEQLLRRT…QLLTVPHMKR (290 aa)) folds into the BEACH domain. WD repeat units lie at residues 2679–2718 (SGIRSSSVIAITSDGEIITGGHADNSIKLVSSDGAKTLET), 2721–2760 (GHCAPVTCLALSPDNNFLVTGSRDSTVLLWRIHKAFTSRT), 2802–2841 (GHRRELVCCCVSSDQGVVVSSSESSDVLLHSIRKGRLIRR), 2842–2881 (LVGVKADSLCISSDGVIMAWSSSEGSISVFTINGVLIAKA), and 2953–2992 (GQGQDITALALNVDNTNLLVSTEDKQLIIFTDPALSLKVV).

The sequence is that of BEACH domain-containing protein C2 from Arabidopsis thaliana (Mouse-ear cress).